The following is a 364-amino-acid chain: ATP synthase gamma chain, chloroplastic (364 aa).

Residues 1–41 (MACSLSFSSSVSTFHLPTTTQSTQAPPNNATTLPTTNPIQC) constitute a chloroplast transit peptide. A disordered region spans residues 17-36 (PTTTQSTQAPPNNATTLPTT). A compositionally biased stretch (low complexity) spans 25-36 (APPNNATTLPTT). The active site involves Cys130. A disulfide bond links Cys240 and Cys246.

This sequence belongs to the ATPase gamma chain family. F-type ATPases have 2 components, CF(1) - the catalytic core - and CF(0) - the membrane proton channel. CF(1) has five subunits: alpha(3), beta(3), gamma(1), delta(1), epsilon(1). CF(0) has four main subunits: a, b, b' and c. Post-translationally, disulfide bond; Cys-240 and Cys-246 are known to form a disulfide bridge in the dark which gives rise to an inactive enzyme. Activation can be brought about by a ferredoxin-dependent reduction of the disulfide bond in the light.

It localises to the plastid. It is found in the chloroplast thylakoid membrane. In terms of biological role, produces ATP from ADP in the presence of a proton gradient across the membrane. The gamma chain is believed to be important in regulating ATPase activity and the flow of protons through the CF(0) complex. The sequence is that of ATP synthase gamma chain, chloroplastic (ATPC) from Spinacia oleracea (Spinach).